A 292-amino-acid chain; its full sequence is Elongation factor Ts (292 aa).

An involved in Mg(2+) ion dislocation from EF-Tu region spans residues 82–85 (TDFV).

It belongs to the EF-Ts family.

The protein localises to the cytoplasm. In terms of biological role, associates with the EF-Tu.GDP complex and induces the exchange of GDP to GTP. It remains bound to the aminoacyl-tRNA.EF-Tu.GTP complex up to the GTP hydrolysis stage on the ribosome. The protein is Elongation factor Ts of Bordetella petrii (strain ATCC BAA-461 / DSM 12804 / CCUG 43448).